Reading from the N-terminus, the 77-residue chain is Probable Fe(2+)-trafficking protein (77 aa).

It belongs to the Fe(2+)-trafficking protein family.

Could be a mediator in iron transactions between iron acquisition and iron-requiring processes, such as synthesis and/or repair of Fe-S clusters in biosynthetic enzymes. This chain is Probable Fe(2+)-trafficking protein, found in Baumannia cicadellinicola subsp. Homalodisca coagulata.